The sequence spans 247 residues: Uridylate kinase (247 aa).

An ATP-binding site is contributed by 16-19; it reads KLSG. Gly58 contributes to the UMP binding site. Residues Gly59 and Arg63 each contribute to the ATP site. UMP is bound by residues Asp78 and 139–146; that span reads TGNPFFTT. Positions 166, 172, and 175 each coordinate ATP.

Belongs to the UMP kinase family. As to quaternary structure, homohexamer.

The protein localises to the cytoplasm. The catalysed reaction is UMP + ATP = UDP + ADP. Its pathway is pyrimidine metabolism; CTP biosynthesis via de novo pathway; UDP from UMP (UMPK route): step 1/1. Inhibited by UTP. Catalyzes the reversible phosphorylation of UMP to UDP. The chain is Uridylate kinase from Xylella fastidiosa (strain 9a5c).